A 685-amino-acid polypeptide reads, in one-letter code: Mannan-binding lectin serine protease 2 (685 aa).

An N-terminal signal peptide occupies residues 1–19 (MRLLIVLGLLWSLVATLLG). The CUB 1 domain occupies 20–137 (SKWPEPVFGR…TGFEAFYAAE (118 aa)). Glutamate 67 and aspartate 75 together coordinate Ca(2+). Cysteine 72 and cysteine 90 are joined by a disulfide. Asparagine 103 is a glycosylation site (N-linked (GlcNAc...) asparagine). Ca(2+) is bound by residues aspartate 120, serine 122, asparagine 123, aspartate 138, and valine 139. The 44-residue stretch at 138–181 (DVDECRTSLGDSVPCDHYCHNYLGGYYCSCRVGYILHQNKHTCS) folds into the EGF-like; calcium-binding domain. 4 disulfide bridges follow: cysteine 152–cysteine 165, cysteine 167–cysteine 180, cysteine 184–cysteine 211, and cysteine 241–cysteine 259. The residue at position 158 (asparagine 158) is a (3R)-3-hydroxyasparagine. 2 residues coordinate Ca(2+): tyrosine 159 and glycine 162. A CUB 2 domain is found at 184–296 (CSGQVFTGRS…TGWKIHYTST (113 aa)). A glycan (N-linked (GlcNAc...) asparagine) is linked at asparagine 285. Sushi domains follow at residues 298 to 363 (QPCP…ECSI) and 364 to 431 (IDCG…VCKP). 7 cysteine pairs are disulfide-bonded: cysteine 300–cysteine 348, cysteine 328–cysteine 361, cysteine 366–cysteine 411, cysteine 396–cysteine 429, cysteine 433–cysteine 551, cysteine 597–cysteine 617, and cysteine 628–cysteine 659. In terms of domain architecture, Peptidase S1 spans 444–683 (IIGGQPAKPG…YIPWIENIIN (240 aa)). Residues histidine 482 and aspartate 531 each act as charge relay system in the active site. Residue serine 632 is the Charge relay system of the active site. N-linked (GlcNAc...) asparagine glycosylation is present at asparagine 641.

Belongs to the peptidase S1 family. Homodimer; disulfide-linked. Binds MBL2. Isoform 2 binds to MASP1. Binds SERPING1. N-glycosylated. Post-translationally, the iron and 2-oxoglutarate dependent 3-hydroxylation of aspartate and asparagine is (R) stereospecific within EGF domains. In terms of tissue distribution, highly expressed in liver. Secreted in plasma.

The protein localises to the secreted. It catalyses the reaction Selective cleavage after Arg-223 in complement component C2 (-Ser-Leu-Gly-Arg-|-Lys-Ile-Gln-Ile) and after Arg-76 in complement component C4 (-Gly-Leu-Gln-Arg-|-Ala-Leu-Glu-Ile).. In terms of biological role, serum protease that plays an important role in the activation of the complement system via mannose-binding lectin. After activation by auto-catalytic cleavage it cleaves C2 and C4, leading to their activation and to the formation of C3 convertase. The sequence is that of Mannan-binding lectin serine protease 2 (Masp2) from Rattus norvegicus (Rat).